The sequence spans 480 residues: Aspartyl/glutamyl-tRNA(Asn/Gln) amidotransferase subunit B (480 aa).

It belongs to the GatB/GatE family. GatB subfamily. In terms of assembly, heterotrimer of A, B and C subunits.

The enzyme catalyses L-glutamyl-tRNA(Gln) + L-glutamine + ATP + H2O = L-glutaminyl-tRNA(Gln) + L-glutamate + ADP + phosphate + H(+). The catalysed reaction is L-aspartyl-tRNA(Asn) + L-glutamine + ATP + H2O = L-asparaginyl-tRNA(Asn) + L-glutamate + ADP + phosphate + 2 H(+). In terms of biological role, allows the formation of correctly charged Asn-tRNA(Asn) or Gln-tRNA(Gln) through the transamidation of misacylated Asp-tRNA(Asn) or Glu-tRNA(Gln) in organisms which lack either or both of asparaginyl-tRNA or glutaminyl-tRNA synthetases. The reaction takes place in the presence of glutamine and ATP through an activated phospho-Asp-tRNA(Asn) or phospho-Glu-tRNA(Gln). This chain is Aspartyl/glutamyl-tRNA(Asn/Gln) amidotransferase subunit B, found in Streptococcus agalactiae serotype III (strain NEM316).